An 808-amino-acid polypeptide reads, in one-letter code: Autophagy-related protein 9 (808 aa).

Over 1 to 205 (MPDVHLSSSF…RGVMNIVLGR (205 aa)) the chain is Cytoplasmic. Positions 51-116 (GDSMIRRDGG…GEIDPQPQNA (66 aa)) are disordered. Low complexity predominate over residues 72–89 (DLSSIESSSSSQDQPPSI). Residues 206-226 (IVDLATLVFVIGFASFLAWGV) form a helical membrane-spanning segment. Residues 227–258 (DYDKFLSRGQKSLTLSDLIIPHYISKAPAMAK) are Lumenal-facing. The chain crosses the membrane as a helical span at residues 259 to 279 (LLLFGFAIYITLRIVQLYFDF). Residues 280–433 (RYKLSEIRNF…KELSSRFKMA (154 aa)) are Cytoplasmic-facing. The stretch at 434–454 (AIINLLLCPFIVVYFVLLYFF) is an intramembrane region. Over 455-517 (RYFNEYKTNP…QFPRGFLVVN (63 aa)) the chain is Cytoplasmic. Residues 518–538 (IMTLVNFVAGAITAVLVVMGL) form a helical membrane-spanning segment. Residues 539-557 (WFEDEEHSFWAFELTENKS) are Lumenal-facing. A helical membrane pass occupies residues 558–578 (ALFYISIFGTIWAVTAGSLAT). Residues 579–633 (DTSSTESANSSSPFYYDPEASLRYVTQFTHYMPSTWSKKLHTAEVKGEFCELFSL) lie on the Cytoplasmic side of the membrane. An intramembrane segment occupies 634–654 (KIVVIINELLSLVLTPFILWF). Over 655-808 (KLSSQSGAII…NQFYKQDLGR (154 aa)) the chain is Cytoplasmic. Disordered regions lie at residues 698–732 (DLNK…GDDK) and 748–771 (ERAA…GSIS). Residues 700 to 711 (NKKKKKSPSHRT) show a composition bias toward basic residues.

This sequence belongs to the ATG9 family. As to quaternary structure, homotrimer; forms a homotrimer with a central pore that forms a path between the two membrane leaflets. In terms of processing, phosphorylated by ATG1. ATG1 phosphorylation is required for preautophagosome elongation.

It localises to the preautophagosomal structure membrane. It is found in the cytoplasmic vesicle membrane. The protein resides in the golgi apparatus membrane. Its subcellular location is the endoplasmic reticulum membrane. It carries out the reaction a 1,2-diacyl-sn-glycero-3-phosphocholine(in) = a 1,2-diacyl-sn-glycero-3-phosphocholine(out). The enzyme catalyses a 1,2-diacyl-sn-glycero-3-phospho-L-serine(in) = a 1,2-diacyl-sn-glycero-3-phospho-L-serine(out). It catalyses the reaction a 1,2-diacyl-sn-glycero-3-phosphoethanolamine(in) = a 1,2-diacyl-sn-glycero-3-phosphoethanolamine(out). The catalysed reaction is a 1,2-diacyl-sn-glycero-3-phospho-(1D-myo-inositol-3-phosphate)(in) = a 1,2-diacyl-sn-glycero-3-phospho-(1D-myo-inositol-3-phosphate)(out). Its function is as follows. Phospholipid scramblase involved in autophagy and cytoplasm to vacuole transport (Cvt) vesicle formation. Cycles between the preautophagosomal structure/phagophore assembly site (PAS) and the cytoplasmic vesicle pool and supplies membrane for the growing autophagosome. Lipid scramblase activity plays a key role in preautophagosomal structure/phagophore assembly by distributing the phospholipids that arrive through ATG2 from the cytoplasmic to the luminal leaflet of the bilayer, thereby driving autophagosomal membrane expansion. Required for mitophagy. Also involved in endoplasmic reticulum-specific autophagic process and is essential for the survival of cells subjected to severe ER stress. Different machineries are required for anterograde trafficking to the PAS during either the Cvt pathway or bulk autophagy and for retrograde trafficking. The polypeptide is Autophagy-related protein 9 (ATG9) (Meyerozyma guilliermondii (strain ATCC 6260 / CBS 566 / DSM 6381 / JCM 1539 / NBRC 10279 / NRRL Y-324) (Yeast)).